The following is a 463-amino-acid chain: T-box transcription factor TBX1-B (463 aa).

Disordered stretches follow at residues 39-58 and 75-102; these read SPSPGDPYSQHEPHYEPCSA and GASSSSCASSTPGSGSTGSSSGNKAPVK. Residues 75 to 96 show a composition bias toward low complexity; that stretch reads GASSSSCASSTPGSGSTGSSSG. The segment at residues 119-297 is a DNA-binding region (T-box); it reads LWDEFNQLGT…SNPFAKGFRD (179 aa). Disordered stretches follow at residues 320-343 and 367-406; these read RSRNPVSSPPQNGSDKDGDGRREY and SPSLPVPGGLVPLSTGRPSPPHELRLDPHSQGSEPLHHHP. Over residues 323–332 the composition is skewed to polar residues; sequence NPVSSPPQNG. Residues 333-343 show a composition bias toward basic and acidic residues; it reads SDKDGDGRREY. The span at 367 to 380 shows a compositional bias: low complexity; that stretch reads SPSLPVPGGLVPLS. A Nuclear localization signal motif is present at residues 420-431; the sequence is KTRPAPYPLPSI.

Binds DNA as a dimer. Interacts with dscr6/ripply3.

The protein resides in the nucleus. Probable transcriptional regulator involved in developmental processes. Binds to the palindromic T site 5'-TTCACACCTAGGTGTGAA-3' DNA sequence. Induces pre-placodal ectoderm (PPE) gene expression in regions where RIPPLY3 is absent. Plays a role in the formation of the anteroposterior (AP) axis during embryonic development; required to establish the posterolateral border of the pre-placodal ectoderm (PPE) acting downstream of the retinoic acid receptor (RAR) signaling. In terms of biological role, probable transcriptional regulator involved in developmental processes. Binds to the palindromic T site 5'-TTCACACCTAGGTGTGAA-3' DNA sequence. Is required for normal development of the pharyngeal arch arteries. In Xenopus laevis (African clawed frog), this protein is T-box transcription factor TBX1-B (tbx1-b).